The following is a 196-amino-acid chain: Peptidyl-tRNA hydrolase (196 aa).

Tyrosine 17 is a binding site for tRNA. Residue histidine 22 is the Proton acceptor of the active site. The tRNA site is built by phenylalanine 68, asparagine 70, and asparagine 116.

This sequence belongs to the PTH family. As to quaternary structure, monomer.

It is found in the cytoplasm. It carries out the reaction an N-acyl-L-alpha-aminoacyl-tRNA + H2O = an N-acyl-L-amino acid + a tRNA + H(+). Functionally, hydrolyzes ribosome-free peptidyl-tRNAs (with 1 or more amino acids incorporated), which drop off the ribosome during protein synthesis, or as a result of ribosome stalling. Catalyzes the release of premature peptidyl moieties from peptidyl-tRNA molecules trapped in stalled 50S ribosomal subunits, and thus maintains levels of free tRNAs and 50S ribosomes. The polypeptide is Peptidyl-tRNA hydrolase (Serratia proteamaculans (strain 568)).